The primary structure comprises 318 residues: Biotin synthase (318 aa).

The 221-residue stretch at 40 to 260 (DDIQKASLLS…VATARIIMPL (221 aa)) folds into the Radical SAM core domain. The [4Fe-4S] cluster site is built by cysteine 55, cysteine 59, and cysteine 62. Residues cysteine 100, cysteine 132, cysteine 192, and arginine 264 each coordinate [2Fe-2S] cluster.

This sequence belongs to the radical SAM superfamily. Biotin synthase family. As to quaternary structure, homodimer. The cofactor is [4Fe-4S] cluster. [2Fe-2S] cluster serves as cofactor.

The enzyme catalyses (4R,5S)-dethiobiotin + (sulfur carrier)-SH + 2 reduced [2Fe-2S]-[ferredoxin] + 2 S-adenosyl-L-methionine = (sulfur carrier)-H + biotin + 2 5'-deoxyadenosine + 2 L-methionine + 2 oxidized [2Fe-2S]-[ferredoxin]. It functions in the pathway cofactor biosynthesis; biotin biosynthesis; biotin from 7,8-diaminononanoate: step 2/2. Functionally, catalyzes the conversion of dethiobiotin (DTB) to biotin by the insertion of a sulfur atom into dethiobiotin via a radical-based mechanism. The protein is Biotin synthase of Ruegeria pomeroyi (strain ATCC 700808 / DSM 15171 / DSS-3) (Silicibacter pomeroyi).